Consider the following 396-residue polypeptide: Elongation factor Tu (396 aa).

In terms of domain architecture, tr-type G spans 10–206 (KPHVNVGTIG…ALDTYIPTPE (197 aa)). The interval 19-26 (GHVDHGKT) is G1. Residue 19–26 (GHVDHGKT) participates in GTP binding. T26 contributes to the Mg(2+) binding site. Positions 60 to 64 (GITIN) are G2. The tract at residues 81–84 (DCPG) is G3. GTP-binding positions include 81–85 (DCPGH) and 136–139 (NKCD). The G4 stretch occupies residues 136–139 (NKCD). The tract at residues 174–176 (SAK) is G5.

This sequence belongs to the TRAFAC class translation factor GTPase superfamily. Classic translation factor GTPase family. EF-Tu/EF-1A subfamily. As to quaternary structure, monomer.

The protein localises to the cytoplasm. It catalyses the reaction GTP + H2O = GDP + phosphate + H(+). In terms of biological role, GTP hydrolase that promotes the GTP-dependent binding of aminoacyl-tRNA to the A-site of ribosomes during protein biosynthesis. The chain is Elongation factor Tu from Paraburkholderia xenovorans (strain LB400).